The chain runs to 130 residues: Small ribosomal subunit protein uS8 (130 aa).

The protein belongs to the universal ribosomal protein uS8 family. Part of the 30S ribosomal subunit. Contacts proteins S5 and S12.

One of the primary rRNA binding proteins, it binds directly to 16S rRNA central domain where it helps coordinate assembly of the platform of the 30S subunit. The sequence is that of Small ribosomal subunit protein uS8 from Buchnera aphidicola subsp. Cinara cedri (strain Cc).